Reading from the N-terminus, the 2055-residue chain is Citron rho-interacting kinase (2055 aa).

Positions 97 to 359 (FEVRSLVGCG…FEGLCCHPFF (263 aa)) constitute a Protein kinase domain. ATP is bound by residues 103–111 (VGCGHFAEV) and lysine 126. Residue aspartate 221 is the Proton acceptor of the active site. The AGC-kinase C-terminal domain occupies 360–430 (ARTDWNNIRN…SKALGYLGRS (71 aa)). The tract at residues 375–398 (VPTLKSDDDTSNFDEPEKNSWVSS) is disordered. 3 coiled-coil regions span residues 457–747 (LQDS…AQVS), 773–1238 (IKKD…LEYQ), and 1284–1318 (YNELKLALEKEKARCAELEEALQKTRIELRSAREE). The segment at 1349-1376 (PEHQPSAMSLLAPPSSRRKEASTPEEFS) is disordered. A compositionally biased stretch (low complexity) spans 1353–1363 (PSAMSLLAPPS). A compositionally biased stretch (basic and acidic residues) spans 1365–1376 (RRKEASTPEEFS). The Phorbol-ester/DAG-type zinc finger occupies 1388-1437 (PHRFNVGLNMRATKCAVCLDTVHFGRQASKCLECQVMCHPKCSTCLPATC). One can recognise a PH domain in the interval 1469 to 1589 (SLHLEGWMKV…WVTALESVVA (121 aa)). Positions 1617 to 1907 (RLDMNCTLPF…RYLGPAISSG (291 aa)) constitute a CNH domain. Residues 1932 to 2040 (SGTEQHRVPS…RGRLPAGAVR (109 aa)) are disordered. The span at 1939–1948 (VPSTSRSSPN) shows a compositional bias: polar residues. The span at 1974-2031 (SHPREPSTPHRYRDREGRTELRRDKSPGRPLEREKSPGRMLSTRRERSPGRLFEDSSR) shows a compositional bias: basic and acidic residues.

Belongs to the protein kinase superfamily. AGC Ser/Thr protein kinase family. In terms of assembly, homodimer. Directly interacts with KIF14 depending on the activation state (stronger interaction with the kinase-dead form). Interacts with TTC3.

It is found in the cytoplasm. It catalyses the reaction L-seryl-[protein] + ATP = O-phospho-L-seryl-[protein] + ADP + H(+). It carries out the reaction L-threonyl-[protein] + ATP = O-phospho-L-threonyl-[protein] + ADP + H(+). Its function is as follows. Plays a role in cytokinesis. Required for KIF14 localization to the central spindle and midbody. Putative RHO/RAC effector that binds to the GTP-bound forms of RHO and RAC1. It probably binds p21 with a tighter specificity in vivo. Displays serine/threonine protein kinase activity. Plays an important role in the regulation of cytokinesis and the development of the central nervous system. Phosphorylates MYL9/MLC2. This Rattus norvegicus (Rat) protein is Citron rho-interacting kinase.